The sequence spans 354 residues: MTTVIQRRSTSNVWEQFCEWVTSTDNRLYIGWFGVLMIPTLLTATTCFIIAFIGAPPVDIDGIREPVSGSLLYGNNIITGAVVPSSAAIGLHFYPIWEAASLDEWLYNGGPYQLIVLHFLIGVFCYMGREWELSYRLGMRPWIAVAYSAPVAAATAVFLIYPIGQGSFSDGMPLGISGTFNFMLVFQAEHNILMHPFHQLGVAGVFGGALFSAMHGSLVTSSLIRETSEEESQNLGYKFGQEEETYNIVAAHGYFGRLIFQYASFNNSRSLHFFLAAWPVIGIWFTALGISIMAFNLNGFNFNQSIVDSNGRVVGTWADVLNRANLGMEVMHERNAHNFPLDLAAVEVAPAVRG.

3 helical membrane passes run 29–46, 118–133, and 142–156; these read YIGW…TATT, HFLI…EWEL, and WIAV…AATA. H118 is a binding site for chlorophyll a. Y126 contributes to the pheophytin a binding site. Residues D170 and E189 each contribute to the [CaMn4O5] cluster site. Residues 197 to 218 form a helical membrane-spanning segment; the sequence is FHQLGVAGVFGGALFSAMHGSL. H198 contributes to the chlorophyll a binding site. A quinone contacts are provided by residues H215 and 264-265; that span reads SF. Residue H215 coordinates Fe cation. H272 serves as a coordination point for Fe cation. Residues 274 to 288 traverse the membrane as a helical segment; it reads FLAAWPVIGIWFTAL. Residues H332, E333, D342, and A344 each coordinate [CaMn4O5] cluster. A propeptide spanning residues 345-354 is cleaved from the precursor; sequence AVEVAPAVRG.

The protein belongs to the reaction center PufL/M/PsbA/D family. In terms of assembly, PSII is composed of 1 copy each of membrane proteins PsbA, PsbB, PsbC, PsbD, PsbE, PsbF, PsbH, PsbI, PsbJ, PsbK, PsbL, PsbM, PsbT, PsbX, PsbY, PsbZ, Psb30/Ycf12, peripheral proteins PsbO, CyanoQ (PsbQ), PsbU, PsbV and a large number of cofactors. It forms dimeric complexes. It depends on The D1/D2 heterodimer binds P680, chlorophylls that are the primary electron donor of PSII, and subsequent electron acceptors. It shares a non-heme iron and each subunit binds pheophytin, quinone, additional chlorophylls, carotenoids and lipids. D1 provides most of the ligands for the Mn4-Ca-O5 cluster of the oxygen-evolving complex (OEC). There is also a Cl(-1) ion associated with D1 and D2, which is required for oxygen evolution. The PSII complex binds additional chlorophylls, carotenoids and specific lipids. as a cofactor. In terms of processing, tyr-161 forms a radical intermediate that is referred to as redox-active TyrZ, YZ or Y-Z. C-terminally processed by CtpA; processing is essential to allow assembly of the oxygen-evolving complex and thus photosynthetic growth.

It is found in the cellular thylakoid membrane. The catalysed reaction is 2 a plastoquinone + 4 hnu + 2 H2O = 2 a plastoquinol + O2. Its function is as follows. Photosystem II (PSII) is a light-driven water:plastoquinone oxidoreductase that uses light energy to abstract electrons from H(2)O, generating O(2) and a proton gradient subsequently used for ATP formation. It consists of a core antenna complex that captures photons, and an electron transfer chain that converts photonic excitation into a charge separation. The D1/D2 (PsbA/PsbD) reaction center heterodimer binds P680, the primary electron donor of PSII as well as several subsequent electron acceptors. This chain is Photosystem II protein D1 3, found in Synechococcus sp. (strain JA-3-3Ab) (Cyanobacteria bacterium Yellowstone A-Prime).